We begin with the raw amino-acid sequence, 683 residues long: Elongation factor G 1 (683 aa).

A tr-type G domain is found at 3–278 (DKMRNIGIMA…AVVDFLPAPN (276 aa)). Residues 12 to 19 (AHIDAGKT), 76 to 80 (DTPGH), and 130 to 133 (NKMD) each bind GTP.

This sequence belongs to the TRAFAC class translation factor GTPase superfamily. Classic translation factor GTPase family. EF-G/EF-2 subfamily.

Its subcellular location is the cytoplasm. In terms of biological role, catalyzes the GTP-dependent ribosomal translocation step during translation elongation. During this step, the ribosome changes from the pre-translocational (PRE) to the post-translocational (POST) state as the newly formed A-site-bound peptidyl-tRNA and P-site-bound deacylated tRNA move to the P and E sites, respectively. Catalyzes the coordinated movement of the two tRNA molecules, the mRNA and conformational changes in the ribosome. The polypeptide is Elongation factor G 1 (Treponema denticola (strain ATCC 35405 / DSM 14222 / CIP 103919 / JCM 8153 / KCTC 15104)).